Reading from the N-terminus, the 244-residue chain is Triosephosphate isomerase (244 aa).

9 to 11 lines the substrate pocket; sequence NWK. His-93 (electrophile) is an active-site residue. Catalysis depends on Glu-160, which acts as the Proton acceptor. The substrate site is built by Gly-166 and Ser-206.

The protein belongs to the triosephosphate isomerase family. In terms of assembly, homodimer.

It localises to the cytoplasm. The catalysed reaction is D-glyceraldehyde 3-phosphate = dihydroxyacetone phosphate. Its pathway is carbohydrate biosynthesis; gluconeogenesis. It functions in the pathway carbohydrate degradation; glycolysis; D-glyceraldehyde 3-phosphate from glycerone phosphate: step 1/1. In terms of biological role, involved in the gluconeogenesis. Catalyzes stereospecifically the conversion of dihydroxyacetone phosphate (DHAP) to D-glyceraldehyde-3-phosphate (G3P). This Mycoplasma genitalium (strain ATCC 33530 / DSM 19775 / NCTC 10195 / G37) (Mycoplasmoides genitalium) protein is Triosephosphate isomerase.